Consider the following 1934-residue polypeptide: Tudor domain-containing protein 15 (1934 aa).

Tudor domains are found at residues 59–117, 289–347, 531–589, 799–856, 1011–1070, and 1342–1401; these read NVEI…LFEL, CDNF…FILV, KPEP…FCEL, PYEI…FLLL, DSNK…FPEL, and KPLV…FLTV. The interval 1490–1510 is disordered; that stretch reads VRPGDNEMKKGKSNESEGSMN. Basic and acidic residues predominate over residues 1491–1504; it reads RPGDNEMKKGKSNE. 2 Tudor domains span residues 1574-1633 and 1780-1838; these read SIEK…IRNI and FIIP…PEEL.

The chain is Tudor domain-containing protein 15 (TDRD15) from Homo sapiens (Human).